A 166-amino-acid chain; its full sequence is Phospholipase A2 inhibitor (166 aa).

Positions 1–19 are cleaved as a signal peptide; the sequence is MRLILLSGLLLLGIFLANG. One can recognise a C-type lectin domain in the interval 46–161; it reads LKGSFLIVHK…CDDNLLVVCE (116 aa). 2 disulfides stabilise this stretch: Cys83-Cys160 and Cys138-Cys152. N-linked (GlcNAc...) asparagine glycosylation occurs at Asn122.

It belongs to the alpha-type phospholipase A2 inhibitor family. In terms of assembly, homotrimer; non-covalently linked. In terms of tissue distribution, expressed by the liver.

It is found in the secreted. In terms of biological role, this phospholipase A2 inhibitor binds directly phospholipase A2 in the presence or absence of calcium. The protein is Phospholipase A2 inhibitor of Bothrops jararacussu (Jararacussu).